Here is a 209-residue protein sequence, read N- to C-terminus: MRDPVEFYNSALVPMVVEQSSRGERAFDIYSRLLRERIIFLTGPVEDYSASLIVAQLLFLEAENPKKEISFYINSPGGVVTSGLSIYDTMQFIRCPVATLCVGQAASMGSLLLAAGEPGHRFALPNARIMVHQPSGGFQGQATDILIHAREIEALKRRLNEIYVKHTGRDYDTIELGLERDNFMTADAAREWGLIDEVLQKRAEASPAA.

Serine 107 serves as the catalytic Nucleophile. Histidine 132 is an active-site residue.

The protein belongs to the peptidase S14 family. As to quaternary structure, fourteen ClpP subunits assemble into 2 heptameric rings which stack back to back to give a disk-like structure with a central cavity, resembling the structure of eukaryotic proteasomes.

Its subcellular location is the cytoplasm. It carries out the reaction Hydrolysis of proteins to small peptides in the presence of ATP and magnesium. alpha-casein is the usual test substrate. In the absence of ATP, only oligopeptides shorter than five residues are hydrolyzed (such as succinyl-Leu-Tyr-|-NHMec, and Leu-Tyr-Leu-|-Tyr-Trp, in which cleavage of the -Tyr-|-Leu- and -Tyr-|-Trp bonds also occurs).. Cleaves peptides in various proteins in a process that requires ATP hydrolysis. Has a chymotrypsin-like activity. Plays a major role in the degradation of misfolded proteins. This chain is ATP-dependent Clp protease proteolytic subunit, found in Methylobacterium nodulans (strain LMG 21967 / CNCM I-2342 / ORS 2060).